Consider the following 168-residue polypeptide: UPF0262 protein BBta_0898 (168 aa).

Belongs to the UPF0262 family.

The protein is UPF0262 protein BBta_0898 of Bradyrhizobium sp. (strain BTAi1 / ATCC BAA-1182).